Here is a 609-residue protein sequence, read N- to C-terminus: Leukotriene A-4 hydrolase (609 aa).

Residues 131 to 133 and 263 to 268 each bind a peptide; these read QCQ and PYGGME. H292 contributes to the Zn(2+) binding site. E293 acts as the Proton acceptor in catalysis. Zn(2+) contacts are provided by H296 and E315. The Proton donor role is filled by Y380. A peptide is bound at residue 560 to 562; sequence RMK.

It belongs to the peptidase M1 family. Homodimer. The cofactor is Zn(2+). In terms of tissue distribution, expressed in oocytes.

It is found in the cytoplasm. The enzyme catalyses Release of the N-terminal residue from a tripeptide.. It catalyses the reaction leukotriene A4 + H2O = leukotriene B4. It participates in lipid metabolism; leukotriene B4 biosynthesis. The epoxide hydrolase activity is mildly restrained by suicide inactivation, possibly involving binding of LTA4 to Tyr-380. In terms of biological role, bifunctional zinc metalloenzyme that comprises both epoxide hydrolase (EH) and aminopeptidase activities. Acts as an epoxide hydrolase to catalyze the conversion of leukotriene A4 (LTA4) to the pro-inflammatory mediator leukotriene B4 (LTB4). During the conversion of LTA4 to LTB4, a second product is formed, the isomeric delta6-trans-delta8-cis-LTB4 (5S,12R-dihydroxy-6,10-trans-8,14-cis-eicosatetraenoic acid), with a relative formation of 10% delta6-trans-delta8-cis-LTB4 compared to 90% LTB4. The production of delta6-trans-delta8-cis-LTB4 seems to depend on the phenylalanine residue at position 375. Also has aminopeptidase activity. The protein is Leukotriene A-4 hydrolase of Xenopus laevis (African clawed frog).